Consider the following 210-residue polypeptide: Thymidylate kinase (210 aa).

Residue 10–17 (GLEGAGKT) coordinates ATP.

The protein belongs to the thymidylate kinase family.

The enzyme catalyses dTMP + ATP = dTDP + ADP. Its function is as follows. Phosphorylation of dTMP to form dTDP in both de novo and salvage pathways of dTTP synthesis. This chain is Thymidylate kinase, found in Actinobacillus succinogenes (strain ATCC 55618 / DSM 22257 / CCUG 43843 / 130Z).